The following is a 171-amino-acid chain: Peptide methionine sulfoxide reductase MsrA (171 aa).

The active site involves Cys-13.

The protein belongs to the MsrA Met sulfoxide reductase family.

It catalyses the reaction L-methionyl-[protein] + [thioredoxin]-disulfide + H2O = L-methionyl-(S)-S-oxide-[protein] + [thioredoxin]-dithiol. The enzyme catalyses [thioredoxin]-disulfide + L-methionine + H2O = L-methionine (S)-S-oxide + [thioredoxin]-dithiol. Its function is as follows. Has an important function as a repair enzyme for proteins that have been inactivated by oxidation. Catalyzes the reversible oxidation-reduction of methionine sulfoxide in proteins to methionine. This chain is Peptide methionine sulfoxide reductase MsrA, found in Mycobacterium sp. (strain JLS).